A 556-amino-acid polypeptide reads, in one-letter code: Probable zinc metalloprotease EGY2, chloroplastic (556 aa).

A chloroplast-targeting transit peptide spans 1–64; that stretch reads MNLAVASFRG…VFRKRETLVR (64 aa). The tract at residues 63-133 is disordered; sequence VRVTETQTEP…DGDKLEVSSG (71 aa). 7 consecutive transmembrane segments (helical) span residues 267 to 287, 311 to 331, 336 to 356, 374 to 394, 437 to 457, 484 to 504, and 527 to 547; these read AVPEWFAAGSFGLVALFTLFL, LPGALVTALVLGVHELGHILV, GIKLGVPFFVPSWQIGSFGAI, AAGPLAGFSLGLILFLIGLFV, PLVIWAWAGLLINGINSIPAG, LLGLSALFSDVAFYWVVLIFF, and LGILVLFLSLLVCLPYPFAFT.

The protein belongs to the peptidase M50B family.

The protein localises to the plastid. It localises to the chloroplast membrane. In terms of biological role, probable membrane-associated metalloprotease that may be involved in chloroplast development. The protein is Probable zinc metalloprotease EGY2, chloroplastic (EGY2) of Arabidopsis thaliana (Mouse-ear cress).